Here is a 175-residue protein sequence, read N- to C-terminus: Ribosome maturation factor RimM (175 aa).

Residues 96–172 (PDTYYDHQLE…LIEIDPPDGL (77 aa)) form the PRC barrel domain.

Belongs to the RimM family. Binds ribosomal protein uS19.

The protein localises to the cytoplasm. An accessory protein needed during the final step in the assembly of 30S ribosomal subunit, possibly for assembly of the head region. Essential for efficient processing of 16S rRNA. May be needed both before and after RbfA during the maturation of 16S rRNA. It has affinity for free ribosomal 30S subunits but not for 70S ribosomes. The chain is Ribosome maturation factor RimM from Mycobacterium avium (strain 104).